We begin with the raw amino-acid sequence, 468 residues long: ATP synthase subunit beta (468 aa).

Position 155–162 (155–162 (GGAGVGKT)) interacts with ATP.

The protein belongs to the ATPase alpha/beta chains family. F-type ATPases have 2 components, CF(1) - the catalytic core - and CF(0) - the membrane proton channel. CF(1) has five subunits: alpha(3), beta(3), gamma(1), delta(1), epsilon(1). CF(0) has three main subunits: a(1), b(2) and c(9-12). The alpha and beta chains form an alternating ring which encloses part of the gamma chain. CF(1) is attached to CF(0) by a central stalk formed by the gamma and epsilon chains, while a peripheral stalk is formed by the delta and b chains.

Its subcellular location is the cell membrane. It catalyses the reaction ATP + H2O + 4 H(+)(in) = ADP + phosphate + 5 H(+)(out). Its function is as follows. Produces ATP from ADP in the presence of a proton gradient across the membrane. The catalytic sites are hosted primarily by the beta subunits. The sequence is that of ATP synthase subunit beta from Streptococcus pyogenes serotype M6 (strain ATCC BAA-946 / MGAS10394).